The primary structure comprises 105 residues: Small ribosomal subunit protein eS26 (105 aa).

This sequence belongs to the eukaryotic ribosomal protein eS26 family. In terms of assembly, component of the small ribosomal subunit.

It localises to the cytoplasm. This is Small ribosomal subunit protein eS26 (RPS26) from Encephalitozoon cuniculi (strain GB-M1) (Microsporidian parasite).